Here is a 367-residue protein sequence, read N- to C-terminus: Protein RecA (367 aa).

ATP is bound at residue 73–80; sequence GPESSGKT. The disordered stretch occupies residues 345–367; it reads DEPVAKKASAKESKEAKELKEVE.

This sequence belongs to the RecA family.

The protein localises to the cytoplasm. In terms of biological role, can catalyze the hydrolysis of ATP in the presence of single-stranded DNA, the ATP-dependent uptake of single-stranded DNA by duplex DNA, and the ATP-dependent hybridization of homologous single-stranded DNAs. It interacts with LexA causing its activation and leading to its autocatalytic cleavage. The protein is Protein RecA of Janthinobacterium sp. (strain Marseille) (Minibacterium massiliensis).